A 308-amino-acid chain; its full sequence is MRHFLSLNELTKDEILYLVDLACRLKSEVKRGFFFPYLKHKALGLIFTKASTRTRVSFEVGINQLGGYSLYLSKNDLQLGRGETIEDTAKVLSRYLDLIVIRTYAQSEVEEFAKYSSIPVINGLTDDYHPTQIIADFQTIFEEKGRLKDLKIAYIGDGNNVAATLLVGASKLGLDIAVATPKGYEIKKEVVDFAKDEAKRSGSNLIFTDNPKEAVKDADVVYTDTWVSMGQEEEKEKRIKDFEGYQVTQELMKLAKEDAIFLHCLPAYRGFEVTPEVIDGPQSKVFDEAENRLHAHKAIMVFVCLGRI.

Carbamoyl phosphate is bound by residues 51–54, Q78, R102, and 129–132; these read STRT and HPTQ. L-ornithine is bound by residues N160, D224, and 228–229; that span reads SM. Residues 264-265 and R292 contribute to the carbamoyl phosphate site; that span reads CL.

The protein belongs to the aspartate/ornithine carbamoyltransferase superfamily. OTCase family.

Its subcellular location is the cytoplasm. It carries out the reaction carbamoyl phosphate + L-ornithine = L-citrulline + phosphate + H(+). Its pathway is amino-acid biosynthesis; L-arginine biosynthesis; L-arginine from L-ornithine and carbamoyl phosphate: step 1/3. Its function is as follows. Reversibly catalyzes the transfer of the carbamoyl group from carbamoyl phosphate (CP) to the N(epsilon) atom of ornithine (ORN) to produce L-citrulline. The chain is Ornithine carbamoyltransferase from Caldicellulosiruptor saccharolyticus (strain ATCC 43494 / DSM 8903 / Tp8T 6331).